The chain runs to 370 residues: Tryptophan--tRNA ligase (370 aa).

Positions Pro-75–His-83 match the 'HIGH' region motif. The short motif at Lys-255–Ser-259 is the 'KMSKS' region element.

It belongs to the class-I aminoacyl-tRNA synthetase family.

The protein localises to the cytoplasm. It catalyses the reaction tRNA(Trp) + L-tryptophan + ATP = L-tryptophyl-tRNA(Trp) + AMP + diphosphate + H(+). This Methanocaldococcus jannaschii (strain ATCC 43067 / DSM 2661 / JAL-1 / JCM 10045 / NBRC 100440) (Methanococcus jannaschii) protein is Tryptophan--tRNA ligase.